Consider the following 153-residue polypeptide: Neuromedin-S (153 aa).

An N-terminal signal peptide occupies residues 1–26; the sequence is MKHPLPHYSPILFIYCFCMLQIPSSG. 3 propeptides span residues 27-69, 70-105, and 106-108; these read ASPP…VYKR, FLFH…ASRR, and MKR. Asparagine amide is present on Asn144. Positions 147–153 are excised as a propeptide; it reads YTDNNFQ.

Belongs to the NmU family.

The protein localises to the secreted. Implicated in the regulation of circadian rhythms through autocrine and/or paracrine actions. The protein is Neuromedin-S (Nms) of Mus musculus (Mouse).